The primary structure comprises 260 residues: NAD-capped RNA hydrolase NudC (260 aa).

Residues K25 and R69 each contribute to the substrate site. Positions 98 and 101 each coordinate Zn(2+). Substrate is bound at residue E111. Zn(2+)-binding residues include C116 and C119. Y124 provides a ligand contact to substrate. A Nudix hydrolase domain is found at 125–248 (PQIAPCVIVA…TVARRLIEDT (124 aa)). A divalent metal cation contacts are provided by A158, E174, and E178. Residues 159 to 180 (GFVEVGETLEQAVSREVLEESN) carry the Nudix box motif. Residue 192-199 (QPWPFPHS) participates in substrate binding. Position 219 (E219) interacts with a divalent metal cation. A241 contacts substrate.

Belongs to the Nudix hydrolase family. NudC subfamily. Homodimer. It depends on Mg(2+) as a cofactor. Mn(2+) serves as cofactor. The cofactor is Zn(2+).

It catalyses the reaction a 5'-end NAD(+)-phospho-ribonucleoside in mRNA + H2O = a 5'-end phospho-adenosine-phospho-ribonucleoside in mRNA + beta-nicotinamide D-ribonucleotide + 2 H(+). The catalysed reaction is NAD(+) + H2O = beta-nicotinamide D-ribonucleotide + AMP + 2 H(+). The enzyme catalyses NADH + H2O = reduced beta-nicotinamide D-ribonucleotide + AMP + 2 H(+). MRNA decapping enzyme that specifically removes the nicotinamide adenine dinucleotide (NAD) cap from a subset of mRNAs by hydrolyzing the diphosphate linkage to produce nicotinamide mononucleotide (NMN) and 5' monophosphate mRNA. The NAD-cap is present at the 5'-end of some mRNAs and stabilizes RNA against 5'-processing. Has preference for mRNAs with a 5'-end purine. Catalyzes the hydrolysis of a broad range of dinucleotide pyrophosphates. In Yersinia pestis bv. Antiqua (strain Antiqua), this protein is NAD-capped RNA hydrolase NudC.